The sequence spans 231 residues: Flagellar L-ring protein (231 aa).

Residues 1–18 (MSRLLIVVSLSSAFALAG) form the signal peptide. A lipid anchor (N-palmitoyl cysteine) is attached at C19. Residue C19 is the site of S-diacylglycerol cysteine attachment.

It belongs to the FlgH family. As to quaternary structure, the basal body constitutes a major portion of the flagellar organelle and consists of four rings (L,P,S, and M) mounted on a central rod.

It is found in the cell outer membrane. Its subcellular location is the bacterial flagellum basal body. Its function is as follows. Assembles around the rod to form the L-ring and probably protects the motor/basal body from shearing forces during rotation. The polypeptide is Flagellar L-ring protein (Stutzerimonas stutzeri (strain A1501) (Pseudomonas stutzeri)).